The following is a 27-amino-acid chain: Conotoxin flf14a (27 aa).

2 disulfides stabilise this stretch: Cys6–Cys26 and Cys10–Cys22.

Expressed by the venom duct.

Its subcellular location is the secreted. The protein is Conotoxin flf14a of Conus anabathrum floridanus (Florida cone).